The following is a 207-amino-acid chain: Thymidylate kinase (207 aa).

The tract at residues E11 to E49 is disordered. G12–S19 provides a ligand contact to ATP. A compositionally biased stretch (basic and acidic residues) spans R24–L38.

Belongs to the thymidylate kinase family.

The enzyme catalyses dTMP + ATP = dTDP + ADP. Functionally, phosphorylation of dTMP to form dTDP in both de novo and salvage pathways of dTTP synthesis. The polypeptide is Thymidylate kinase (Dinoroseobacter shibae (strain DSM 16493 / NCIMB 14021 / DFL 12)).